We begin with the raw amino-acid sequence, 126 residues long: Large ribosomal subunit protein bL12 (126 aa).

The protein belongs to the bacterial ribosomal protein bL12 family. In terms of assembly, homodimer. Part of the ribosomal stalk of the 50S ribosomal subunit. Forms a multimeric L10(L12)X complex, where L10 forms an elongated spine to which 2 to 4 L12 dimers bind in a sequential fashion. Binds GTP-bound translation factors.

Functionally, forms part of the ribosomal stalk which helps the ribosome interact with GTP-bound translation factors. Is thus essential for accurate translation. The protein is Large ribosomal subunit protein bL12 of Paracidovorax citrulli (strain AAC00-1) (Acidovorax citrulli).